We begin with the raw amino-acid sequence, 20 residues long: Agglutinin beta-3 chain (20 aa).

Residues 1-20 (GPNGKSQSIIVGPWGDRVTN) form a disordered region.

It belongs to the jacalin lectin family. As to quaternary structure, formed of four alpha chains and four beta chains.

Functionally, D-galactose-specific lectin, binds the T-antigen structure Gal-beta1,3-GalNAc. This chain is Agglutinin beta-3 chain, found in Maclura pomifera (Osage orange).